The sequence spans 299 residues: Coenzyme PQQ synthesis protein B (299 aa).

This sequence belongs to the PqqB family.

The protein operates within cofactor biosynthesis; pyrroloquinoline quinone biosynthesis. Functionally, may be involved in the transport of PQQ or its precursor to the periplasm. The chain is Coenzyme PQQ synthesis protein B from Methylorubrum extorquens (strain PA1) (Methylobacterium extorquens).